The sequence spans 56 residues: Small ribosomal subunit protein uS14 (56 aa).

Zn(2+) is bound by residues cysteine 21, cysteine 24, cysteine 39, and cysteine 42.

The protein belongs to the universal ribosomal protein uS14 family. As to quaternary structure, component of the 40S small ribosomal subunit. Zn(2+) serves as cofactor.

It is found in the cytoplasm. The protein localises to the cytosol. The protein resides in the rough endoplasmic reticulum. This chain is Small ribosomal subunit protein uS14 (RpS29), found in Bombyx mori (Silk moth).